Reading from the N-terminus, the 341-residue chain is THO complex subunit 6 (341 aa).

WD repeat units lie at residues 22–61 (RLHMTIFSQSVSPCGKFLAAGNNYGQIAIFSLSSALSSEA), 74–112 (AHDGPVYSMVSTDRHLLSAGDGEVKAWLWAEMLKKGCKE), 124–165 (LEVP…RVLR), 166–205 (GHTDYIHCLALRERSPEVLSGGEDGAVRLWDLRTAKEVQT), 215–254 (SRPHNGRWIGCLATDSDWMVCGGGPALTLWHLRSSTPTTI), 256–293 (PIRAPQKHVTFYQDLILSAGQGRCVNQWQLSGELKAQV), and 295–339 (GSSP…AFSL). Residue S180 is modified to Phosphoserine.

The protein belongs to the WD repeat THOC6 family. In terms of assembly, component of the THO subcomplex, which is composed of THOC1, THOC2, THOC3, THOC5, THOC6 and THOC7. The THO subcomplex interacts with DDX39B to form the THO-DDX39B complex which multimerizes into a 28-subunit tetrameric assembly. Component of the transcription/export (TREX) complex at least composed of ALYREF/THOC4, DDX39B, SARNP/CIP29, CHTOP and the THO subcomplex; in the complex interacts with THOC5; together with THOC5 and THOC7, plays a key structural role in the oligomerization of the THO-DDX39B complex. TREX seems to have a dynamic structure involving ATP-dependent remodeling.

The protein localises to the nucleus. It localises to the nucleus speckle. In terms of biological role, component of the THO subcomplex of the TREX complex which is thought to couple mRNA transcription, processing and nuclear export, and which specifically associates with spliced mRNA and not with unspliced pre-mRNA. Plays a key structural role in the oligomerization of the THO-DDX39B complex. TREX is recruited to spliced mRNAs by a transcription-independent mechanism, binds to mRNA upstream of the exon-junction complex (EJC) and is recruited in a splicing- and cap-dependent manner to a region near the 5' end of the mRNA where it functions in mRNA export to the cytoplasm via the TAP/NXF1 pathway. Plays a role in apoptosis negative control involved in brain development. Its function is as follows. (Microbial infection) The TREX complex is essential for the export of Kaposi's sarcoma-associated herpesvirus (KSHV) intronless mRNAs and infectious virus production. The chain is THO complex subunit 6 (THOC6) from Homo sapiens (Human).